The primary structure comprises 83 residues: Small ribosomal subunit protein bS16 (83 aa).

The protein belongs to the bacterial ribosomal protein bS16 family.

In Azotobacter vinelandii (strain DJ / ATCC BAA-1303), this protein is Small ribosomal subunit protein bS16.